A 455-amino-acid polypeptide reads, in one-letter code: P2X purinoceptor 5 (455 aa).

At 1-34 (MGQAAWKGFVLSLFDYKTAKFVVAKSKKVGLLYR) the chain is on the cytoplasmic side. Residues 35-55 (VLQLIILLYLLIWVFLIKKSY) traverse the membrane as a helical segment. At 56-341 (QDIDTSLQSA…SIIPTVINIG (286 aa)) the chain is on the extracellular side. Positions 69 and 71 each coordinate ATP. A glycan (N-linked (GlcNAc...) asparagine) is linked at Asn-77. 3 cysteine pairs are disulfide-bonded: Cys-118–Cys-169, Cys-129–Cys-152, and Cys-135–Cys-163. N-linked (GlcNAc...) asparagine glycosylation is present at Asn-157. Position 189 (Thr-189) interacts with ATP. Residue Asn-202 is glycosylated (N-linked (GlcNAc...) asparagine). 2 cysteine pairs are disulfide-bonded: Cys-220-Cys-229 and Cys-263-Cys-272. ATP is bound by residues Asn-294, Arg-296, and Lys-314. A helical transmembrane segment spans residues 342–362 (SGLALMGAGAFFCDLVLIYLI). At 363-455 (RKSEFYRDKK…QSQILHPVKT (93 aa)) the chain is on the cytoplasmic side. Positions 384 to 401 (NVEVEANEMEQERPEDEP) are enriched in acidic residues. Residues 384–422 (NVEVEANEMEQERPEDEPLERVRQDEQSQELAQSGRKQN) form a disordered region. Positions 412–422 (QELAQSGRKQN) are enriched in polar residues.

It belongs to the P2X receptor family. Functional P2XRs are organized as homomeric and heteromeric trimers. Homotrimer. Forms heterotrimer with P2RX1. As to expression, predominantly expressed in heart but are also present in brain, spinal cord and adrenal gland.

It localises to the cell membrane. It carries out the reaction Na(+)(in) = Na(+)(out). It catalyses the reaction Ca(2+)(in) = Ca(2+)(out). The catalysed reaction is chloride(in) = chloride(out). Activated by ATP. Slowly desensitizing. Not activated by ATP agonist alpha/beta-methylene-ATP. Highly sensitive to the antagonists suramin and PPADS. ATP-gated nonselective transmembrane cation channel. Permeable to potassium, sodium and calcium. Unlike other P2RX receptors, the P2X5 receptor is also permeable to chloride. Acts as an important regulator of inflammatory-related bone loss and osteoclast multinucleation. The polypeptide is P2X purinoceptor 5 (P2rx5) (Rattus norvegicus (Rat)).